Here is a 431-residue protein sequence, read N- to C-terminus: Chorismate synthase 2, chloroplastic (431 aa).

The N-terminal 48 residues, 1–48 (MASSMLTKQFLGAPFSSFGSGQQPSKLCSSNLRFPTHRSQPKRLEIQA), are a transit peptide targeting the chloroplast. A disordered region spans residues 93–141 (DRRRPGQSRITTPRKETDTCKISSGTADGLTTGSPIKVEVPNTDQRGND). Residues 112-126 (CKISSGTADGLTTGS) show a composition bias toward polar residues.

It belongs to the chorismate synthase family. As to quaternary structure, homotetramer. FMNH2 serves as cofactor. In terms of tissue distribution, predominantly expressed in flowers and roots and, to a lesser extent, in stems, leaves, and cotyledons.

It localises to the plastid. Its subcellular location is the chloroplast. The enzyme catalyses 5-O-(1-carboxyvinyl)-3-phosphoshikimate = chorismate + phosphate. It participates in metabolic intermediate biosynthesis; chorismate biosynthesis; chorismate from D-erythrose 4-phosphate and phosphoenolpyruvate: step 7/7. Catalyzes the last common step of the biosynthesis of aromatic amino acids, produced via the shikimic acid pathway. This chain is Chorismate synthase 2, chloroplastic (CS2), found in Solanum lycopersicum (Tomato).